The sequence spans 227 residues: ATP phosphoribosyltransferase (227 aa).

Belongs to the ATP phosphoribosyltransferase family. Short subfamily. Heteromultimer composed of HisG and HisZ subunits.

The protein localises to the cytoplasm. The enzyme catalyses 1-(5-phospho-beta-D-ribosyl)-ATP + diphosphate = 5-phospho-alpha-D-ribose 1-diphosphate + ATP. Its pathway is amino-acid biosynthesis; L-histidine biosynthesis; L-histidine from 5-phospho-alpha-D-ribose 1-diphosphate: step 1/9. Catalyzes the condensation of ATP and 5-phosphoribose 1-diphosphate to form N'-(5'-phosphoribosyl)-ATP (PR-ATP). Has a crucial role in the pathway because the rate of histidine biosynthesis seems to be controlled primarily by regulation of HisG enzymatic activity. The chain is ATP phosphoribosyltransferase from Nitrosospira multiformis (strain ATCC 25196 / NCIMB 11849 / C 71).